Reading from the N-terminus, the 419-residue chain is Adenylosuccinate synthetase 1 (419 aa).

A GTP-binding site is contributed by 11-17 (GDEGKGK). Catalysis depends on Asp12, which acts as the Proton acceptor. Mg(2+) is bound by residues Asp12 and Gly39. IMP is bound by residues 12–15 (DEGK), 37–40 (NAGH), Arg138, Gln220, and Arg298. His40 (proton donor) is an active-site residue. Residue 294–300 (TVSKRPR) participates in substrate binding. GTP contacts are provided by residues Arg300, 326–328 (NVD), and 407–409 (SYG).

The protein belongs to the adenylosuccinate synthetase family. As to quaternary structure, homodimer. It depends on Mg(2+) as a cofactor.

It localises to the cytoplasm. The enzyme catalyses IMP + L-aspartate + GTP = N(6)-(1,2-dicarboxyethyl)-AMP + GDP + phosphate + 2 H(+). It functions in the pathway purine metabolism; AMP biosynthesis via de novo pathway; AMP from IMP: step 1/2. Functionally, plays an important role in the de novo pathway of purine nucleotide biosynthesis. Catalyzes the first committed step in the biosynthesis of AMP from IMP. This is Adenylosuccinate synthetase 1 from Photorhabdus laumondii subsp. laumondii (strain DSM 15139 / CIP 105565 / TT01) (Photorhabdus luminescens subsp. laumondii).